Here is a 560-residue protein sequence, read N- to C-terminus: Radial spoke head protein 3 homolog (560 aa).

Disordered stretches follow at residues 134–186 (RKRG…EEPM) and 225–249 (ARKR…PVEG). The span at 153 to 162 (RAPSTYTYTS) shows a compositional bias: polar residues. Residues 215 to 239 (DSLELQRQREARKRALARKQAQEQL) are a coiled coil. T286 is modified (phosphothreonine; by MAPK1). Residues 331 to 385 (LEVMEEEELANLRASQREYEELRNSERAEVQRLEEQERRHREEKERRKKQQWEIM) are a coiled coil. 3 disordered regions span residues 354-375 (NSER…EEKE), 473-498 (HGED…ESLE), and 526-560 (DRRS…EELS).

It belongs to the flagellar radial spoke RSP3 family. In terms of assembly, component of the axonemal radial spoke 1 (RS1) and 2 (RS2) complexes, at least composed of spoke head proteins RSPH1, RSPH3, RSPH9 and the cilia-specific component RSPH4A or sperm-specific component RSPH6A, spoke stalk proteins RSPH14, DNAJB13, DYDC1, ROPN1L and NME5, and the RS1 complex-specific anchor protein IQUB. Interacts with IQUB. Interacts with phosphorylated MAPK1. Interacts with MEK1. Interacts with PKA regulatory subunits PRKAR1A and PRKAR1B. Interacts with RSPH1. Interacts with RSPH4A. Interacts with RSPH6A. Interacts with RSPH9. Interacts with LRRC23.

The protein resides in the cytoplasm. The protein localises to the cytoskeleton. It localises to the cilium axoneme. Its subcellular location is the flagellum axoneme. Its function is as follows. Functions as part of axonemal radial spoke complexes that play an important part in the motility of sperm and cilia. Functions as a protein kinase A-anchoring protein that scaffolds the cAMP-dependent protein kinase holoenzyme. May serve as a point of convergence for MAPK and PKA signaling in cilia. This is Radial spoke head protein 3 homolog (RSPH3) from Homo sapiens (Human).